We begin with the raw amino-acid sequence, 375 residues long: Probable peptidoglycan glycosyltransferase FtsW (375 aa).

Topologically, residues 1–16 (MNLNFKLNLKEIERYD) are cytoplasmic. The helical transmembrane segment at 17 to 37 (LVILLMAVALTCFGVVMVYSA) threads the bilayer. The Periplasmic segment spans residues 38 to 49 (SSVMATKKFHDG). The chain crosses the membrane as a helical span at residues 50–70 (FYFLKRQGIYAILGCAAMIVA). Residues 71-81 (MRIDYRQWREY) are Cytoplasmic-facing. The chain crosses the membrane as a helical span at residues 82–102 (AVPILLGCLLLLLLVFIPGIG). The Periplasmic portion of the chain corresponds to 103–145 (GAAKGASRWIRFPGFNLQPSELAKIALIMYMAYSLDKKQEKVK). The chain crosses the membrane as a helical span at residues 146–166 (FFSTGFAPYMVLLAILLAILL). Over 167–169 (KQH) the chain is Cytoplasmic. Residues 170–190 (DLGSALTMGGVAILMLFAAGT) traverse the membrane as a helical segment. The Periplasmic portion of the chain corresponds to 191–193 (RPR). Residues 194–214 (YILGMVVLTLPFLYFLVMNVD) traverse the membrane as a helical segment. Topologically, residues 215–233 (YRRRRILAYLNPWEDPTNT) are cytoplasmic. A helical transmembrane segment spans residues 234–254 (GFQIIQSWLAFGNGGIIGQGL). The Periplasmic segment spans residues 255–279 (GEGKQKMFFLPEAHTDFILSVVGEE). Residues 280–300 (LGLIGVIVIAAMFLMLVLRGV) form a helical membrane-spanning segment. Over 301–312 (RVALMAQDPFGR) the chain is Cytoplasmic. A helical membrane pass occupies residues 313–333 (FLAFGIVTLLGIQAFVNMGVV). The Periplasmic segment spans residues 334–343 (TGLLPTKGLA). A helical transmembrane segment spans residues 344-364 (LPFISYGGSSLIVTLFAVGIL). At 365 to 375 (LNVSTRMKGTP) the chain is on the cytoplasmic side.

Belongs to the SEDS family. FtsW subfamily.

It localises to the cell inner membrane. It catalyses the reaction [GlcNAc-(1-&gt;4)-Mur2Ac(oyl-L-Ala-gamma-D-Glu-L-Lys-D-Ala-D-Ala)](n)-di-trans,octa-cis-undecaprenyl diphosphate + beta-D-GlcNAc-(1-&gt;4)-Mur2Ac(oyl-L-Ala-gamma-D-Glu-L-Lys-D-Ala-D-Ala)-di-trans,octa-cis-undecaprenyl diphosphate = [GlcNAc-(1-&gt;4)-Mur2Ac(oyl-L-Ala-gamma-D-Glu-L-Lys-D-Ala-D-Ala)](n+1)-di-trans,octa-cis-undecaprenyl diphosphate + di-trans,octa-cis-undecaprenyl diphosphate + H(+). It functions in the pathway cell wall biogenesis; peptidoglycan biosynthesis. Functionally, peptidoglycan polymerase that is essential for cell division. The polypeptide is Probable peptidoglycan glycosyltransferase FtsW (Geobacter metallireducens (strain ATCC 53774 / DSM 7210 / GS-15)).